The sequence spans 123 residues: Urotensin-2 (123 aa).

The first 20 residues, 1–20 (MDRVPFCCLLFIGLLNPLLS), serve as a signal peptide directing secretion. 2 propeptides span residues 21–104 (LPVT…LART) and 107–109 (QHK). The interval 57-88 (RQTMGTEAGESPGEAGPSTETPTPRGSMRKAF) is disordered. A disulfide bridge links cysteine 117 with cysteine 122.

It belongs to the urotensin-2 family. In terms of tissue distribution, brain specific. Predominantly expressed in motoneurons of the brainstem and spinal cord.

Its subcellular location is the secreted. Highly potent vasoconstrictor. The polypeptide is Urotensin-2 (Uts2) (Mus musculus (Mouse)).